Here is a 266-residue protein sequence, read N- to C-terminus: Transcription factor atoh8 (266 aa).

The tract at residues 140–164 is disordered; the sequence is AASQAPAGGSERAESPRKRAGEPSG. The span at 150–160 shows a compositional bias: basic and acidic residues; that stretch reads ERAESPRKRAG. The interval 175 to 188 is basic motif; degenerate; sequence TRRLLANARERTRV. One can recognise a bHLH domain in the interval 175-227; sequence TRRLLANARERTRVHTISAAFEALRKQVPCYSYGQKLSKLAILRIACNYILSL. The interval 189 to 227 is helix-loop-helix motif; it reads HTISAAFEALRKQVPCYSYGQKLSKLAILRIACNYILSL.

It localises to the nucleus. It is found in the nucleus speckle. The protein resides in the cytoplasm. Transcription factor that binds a palindromic (canonical) core consensus DNA sequence 5'-CANNTG- 3' known as an E-box element, possibly as a heterodimer with other bHLH proteins. During development, is required for heart looping and swim bladder formation by acting in concert with GATA4 and ZFPM1. During the development of both the retina and skeletal muscles is required for neural retinal cell through modulating PAX6 and NEUROG3 expression and myogenic differentiation. The sequence is that of Transcription factor atoh8 from Danio rerio (Zebrafish).